Consider the following 565-residue polypeptide: Potassium-transporting ATPase potassium-binding subunit (565 aa).

Helical transmembrane passes span 6–26 (LMLL…LGSL), 63–83 (LLAI…LLMA), 132–152 (GLGV…FALI), 175–195 (LYVL…QGVI), 250–270 (LSNL…CFAF), 283–303 (LLWT…YAEL), 327–347 (FGIL…CGAV), 354–374 (FTAL…VVFG), 379–399 (GLYG…LMIG), 418–438 (ALAI…ALLC), 483–503 (LLLA…VMAI), and 524–544 (GALF…LTFI).

Belongs to the KdpA family. The system is composed of three essential subunits: KdpA, KdpB and KdpC.

The protein localises to the cell inner membrane. Its function is as follows. Part of the high-affinity ATP-driven potassium transport (or Kdp) system, which catalyzes the hydrolysis of ATP coupled with the electrogenic transport of potassium into the cytoplasm. This subunit binds the periplasmic potassium ions and delivers the ions to the membrane domain of KdpB through an intramembrane tunnel. The protein is Potassium-transporting ATPase potassium-binding subunit of Edwardsiella ictaluri (strain 93-146).